The following is a 372-amino-acid chain: Glutamate 5-kinase (372 aa).

Lysine 14 contacts ATP. Substrate contacts are provided by serine 54, aspartate 141, and asparagine 153. 173–174 is an ATP binding site; the sequence is TD. Positions 280–358 constitute a PUA domain; it reads RGTLVLDAGA…DAIEKLLGYV (79 aa).

It belongs to the glutamate 5-kinase family.

It is found in the cytoplasm. It catalyses the reaction L-glutamate + ATP = L-glutamyl 5-phosphate + ADP. The protein operates within amino-acid biosynthesis; L-proline biosynthesis; L-glutamate 5-semialdehyde from L-glutamate: step 1/2. Its function is as follows. Catalyzes the transfer of a phosphate group to glutamate to form L-glutamate 5-phosphate. This chain is Glutamate 5-kinase, found in Ectopseudomonas mendocina (strain ymp) (Pseudomonas mendocina).